A 407-amino-acid polypeptide reads, in one-letter code: Keratin, type I cuticular Ha2 (407 aa).

Positions methionine 1–glutamate 55 are head. Positions glutamate 55–leucine 366 constitute an IF rod domain. Residues lysine 56–valine 90 are coil 1A. The segment at tyrosine 91 to aspartate 101 is linker 1. A coil 1B region spans residues tyrosine 102–glutamine 202. The linker 12 stretch occupies residues glutamine 203 to valine 218. Residues aspartate 219–glutamate 362 form a coil 2 region. Positions aspartate 363–tyrosine 407 are tail.

The protein belongs to the intermediate filament family. Cuticle of the hair shaft.

This chain is Keratin, type I cuticular Ha2 (Krt32), found in Mus musculus (Mouse).